Here is a 467-residue protein sequence, read N- to C-terminus: 3-isopropylmalate dehydratase large subunit (467 aa).

[4Fe-4S] cluster is bound by residues Cys347, Cys408, and Cys411.

It belongs to the aconitase/IPM isomerase family. LeuC type 1 subfamily. As to quaternary structure, heterodimer of LeuC and LeuD. It depends on [4Fe-4S] cluster as a cofactor.

It catalyses the reaction (2R,3S)-3-isopropylmalate = (2S)-2-isopropylmalate. The protein operates within amino-acid biosynthesis; L-leucine biosynthesis; L-leucine from 3-methyl-2-oxobutanoate: step 2/4. Functionally, catalyzes the isomerization between 2-isopropylmalate and 3-isopropylmalate, via the formation of 2-isopropylmaleate. In Bordetella bronchiseptica (strain ATCC BAA-588 / NCTC 13252 / RB50) (Alcaligenes bronchisepticus), this protein is 3-isopropylmalate dehydratase large subunit.